Consider the following 350-residue polypeptide: Major allergen Mal f 1 (350 aa).

A signal peptide spans 1 to 22 (MRYSTVLAALALLGTSAVSVLA).

The protein resides in the secreted. Its subcellular location is the cell wall. The chain is Major allergen Mal f 1 from Malassezia furfur (Pityriasis versicolor infection agent).